Reading from the N-terminus, the 165-residue chain is Protein SprT (165 aa).

One can recognise a SprT-like domain in the interval glutamate 20 to leucine 162. Histidine 78 is a binding site for Zn(2+). Residue glutamate 79 is part of the active site. Histidine 82 lines the Zn(2+) pocket.

This sequence belongs to the SprT family. Requires Zn(2+) as cofactor.

It is found in the cytoplasm. The polypeptide is Protein SprT (Escherichia coli (strain SMS-3-5 / SECEC)).